The chain runs to 257 residues: Small ribosomal subunit protein uS2 (257 aa).

A disordered region spans residues 237-257 (MDEADGSEAEPEDPAAPESAE). The span at 240–257 (ADGSEAEPEDPAAPESAE) shows a compositional bias: acidic residues.

Belongs to the universal ribosomal protein uS2 family.

This is Small ribosomal subunit protein uS2 from Chlorobium phaeovibrioides (strain DSM 265 / 1930) (Prosthecochloris vibrioformis (strain DSM 265)).